A 584-amino-acid chain; its full sequence is ATP-dependent lipid A-core flippase 2 (584 aa).

6 helical membrane-spanning segments follow: residues 32–52 (IFIA…MIYF), 68–88 (TLQL…IASF), 146–166 (SAVV…SMMV), 167–187 (YNSW…ALII), 254–274 (AISN…VLLL), and 280–300 (VLNQ…GSLL). One can recognise an ABC transmembrane type-1 domain in the interval 33–315 (FIALAGLCLF…LSNINQQLQK (283 aa)). Residues 347–583 (IRFNNFSFTY…AGYYQSLYQS (237 aa)) enclose the ABC transporter domain. 381–388 (GESGSGKS) contributes to the ATP binding site.

Belongs to the ABC transporter superfamily. Lipid exporter (TC 3.A.1.106) family. As to quaternary structure, homodimer.

The protein localises to the cell inner membrane. The enzyme catalyses ATP + H2O + lipid A-core oligosaccharideSide 1 = ADP + phosphate + lipid A-core oligosaccharideSide 2.. Its function is as follows. Involved in lipopolysaccharide (LPS) biosynthesis. Translocates lipid A-core from the inner to the outer leaflet of the inner membrane. Transmembrane domains (TMD) form a pore in the inner membrane and the ATP-binding domain (NBD) is responsible for energy generation. The protein is ATP-dependent lipid A-core flippase 2 of Colwellia psychrerythraea (strain 34H / ATCC BAA-681) (Vibrio psychroerythus).